A 494-amino-acid polypeptide reads, in one-letter code: Subtilisin-like serine protease EN45_078720 (494 aa).

The signal sequence occupies residues 1 to 16 (MKGFLSLTLLPLLVAA). Residues 17 to 136 (SPVAVNSIHN…IEKDSEVRTM (120 aa)) constitute a propeptide, removed in mature form. Positions 43–136 (SYIVVFKKHV…IEKDSEVRTM (94 aa)) constitute an Inhibitor I9 domain. One can recognise a Peptidase S8 domain in the interval 146–448 (PWGLARISHR…GGSANYTKIL (303 aa)). IgE-binding regions lie at residues 180–198 (VIDT…RANW) and 209–231 (EDGN…GVAK). Active-site charge relay system residues include Asp-182 and His-214. 2 N-linked (GlcNAc...) asparagine glycosylation sites follow: Asn-244 and Asn-280. Ser-376 acts as the Charge relay system in catalysis. The N-linked (GlcNAc...) asparagine glycan is linked to Asn-443. The propeptide at 454 to 494 (KAHNAETTVEDRIGGIIDSAEKAFHKELGAIYSEIKDAVSA) is removed in mature form.

Belongs to the peptidase S8 family.

Functionally, serine protease. The sequence is that of Subtilisin-like serine protease EN45_078720 from Penicillium chrysogenum (Penicillium notatum).